Reading from the N-terminus, the 351-residue chain is ABC transporter nucleoside-binding protein BmpA (351 aa).

Positions 1-21 (MKKRVIAVSAIALASVAVLAG) are cleaved as a signal peptide. Residue Cys22 is the site of N-palmitoyl cysteine attachment. Cys22 carries S-diacylglycerol cysteine lipidation.

The protein belongs to the BMP lipoprotein family. In terms of assembly, the complex is composed of two ATP-binding proteins (NupA), two transmembrane proteins (NupB and NupC) and a solute-binding protein (BmpA).

The protein resides in the cell membrane. Part of an ABC transporter complex involved in the uptake of all common nucleosides. The polypeptide is ABC transporter nucleoside-binding protein BmpA (Lactococcus lactis subsp. cremoris (strain MG1363)).